Consider the following 67-residue polypeptide: Large ribosomal subunit protein bL35 (67 aa).

Residues 1-16 (MPKMKTKSSAKKRFRV) are compositionally biased toward basic residues. The interval 1-24 (MPKMKTKSSAKKRFRVRPGGTVKR) is disordered.

This sequence belongs to the bacterial ribosomal protein bL35 family.

This Paracidovorax citrulli (strain AAC00-1) (Acidovorax citrulli) protein is Large ribosomal subunit protein bL35.